The primary structure comprises 331 residues: PIN2/TERF1-interacting telomerase inhibitor 1 (331 aa).

Disordered stretches follow at residues 1-28, 156-175, and 197-331; these read MSMLAERRRKQKWAVDPRNTAWSNDDSK, AQDGCSNSTADEADTSLTTT, and SKSQ…KVSR. Residues 26 to 72 form the G-patch domain; that stretch reads DSKFGQKMLEKMGWSKGKGLGAQEQGATEHIKVKVKNNHLGLGATNN. The residue at position 233 (S233) is a Phosphoserine. Over residues 236–246 the composition is skewed to basic residues; sequence HKAKRHKKKKR. Positions 247 to 261 are enriched in basic and acidic residues; the sequence is VEAERGPAAKKRDQV. Residues 254–328 form a telomerase inhibitory domain (TID) region; the sequence is AAKKRDQVEL…DSAPVKKKKK (75 aa). Phosphoserine occurs at positions 269, 274, and 277. Residues 291-301 carry the TBM motif; the sequence is QDDVPKPRKRR. Over residues 297 to 306 the composition is skewed to basic residues; it reads PRKRRAKKTL.

This sequence belongs to the PINX1 family. Interacts with MCRS1, TERT, TERF1, NCL/nucleolin, and the telomerase RNA.

The protein localises to the nucleus. It localises to the nucleolus. The protein resides in the chromosome. It is found in the telomere. Its subcellular location is the centromere. The protein localises to the kinetochore. In terms of biological role, microtubule-binding protein essential for faithful chromosome segregation. Mediates TRF1 and TERT accumulation in nucleolus and enhances TRF1 binding to telomeres. Inhibits telomerase activity. May inhibit cell proliferation and act as tumor suppressor. The polypeptide is PIN2/TERF1-interacting telomerase inhibitor 1 (Rattus norvegicus (Rat)).